Consider the following 66-residue polypeptide: Phylloseptin-H5 (66 aa).

Residues 1–22 (MAFLKKSLFLVLFLGLVSLSIC) form the signal peptide. Positions 23 to 44 (EEEKRETEEEENEQEDDDKSEE) are excised as a propeptide. Residues 24 to 44 (EEKRETEEEENEQEDDDKSEE) are disordered. Over residues 30–41 (EEEENEQEDDDK) the composition is skewed to acidic residues. Position 65 is a phenylalanine amide (Phe-65).

As to expression, expressed by the skin glands.

It is found in the secreted. In terms of biological role, has antibacterial activity against the Gram-negative bacteria E.coli and P.aeruginosa, and the Gram-positive bacterium S.aureus. No hemolytic activity. In Pithecopus hypochondrialis (Orange-legged leaf frog), this protein is Phylloseptin-H5 (psn7).